Here is a 637-residue protein sequence, read N- to C-terminus: Biosynthetic arginine decarboxylase (637 aa).

Residue K101 is modified to N6-(pyridoxal phosphate)lysine. 286-296 (FDVGGGLAVDY) contacts substrate.

It belongs to the Orn/Lys/Arg decarboxylase class-II family. SpeA subfamily. It depends on Mg(2+) as a cofactor. The cofactor is pyridoxal 5'-phosphate.

It carries out the reaction L-arginine + H(+) = agmatine + CO2. The protein operates within amine and polyamine biosynthesis; agmatine biosynthesis; agmatine from L-arginine: step 1/1. In terms of biological role, catalyzes the biosynthesis of agmatine from arginine. The protein is Biosynthetic arginine decarboxylase of Shewanella piezotolerans (strain WP3 / JCM 13877).